A 179-amino-acid polypeptide reads, in one-letter code: Replication restart protein DnaT (179 aa).

Residues 155–179 (NGGLPKRDVNTVSEPDSQIPPGFRG) form a disordered region.

Belongs to the DnaT family. Homooligomerizes. Interacts with PriB. Component of the replication restart primosome. Primosome assembly occurs via a 'hand-off' mechanism. PriA binds to replication forks, subsequently PriB then DnaT bind; DnaT then displaces ssDNA to generate the helicase loading substrate.

Its function is as follows. Involved in the restart of stalled replication forks, which reloads the replicative helicase on sites other than the origin of replication. Can function in multiple replication restart pathways. Displaces ssDNA from a PriB-ssDNA complex. Probably forms a spiral filament on ssDNA. This chain is Replication restart protein DnaT, found in Escherichia coli O8 (strain IAI1).